Here is a 440-residue protein sequence, read N- to C-terminus: Chromosomal replication initiator protein DnaA (440 aa).

Residues 1 to 74 form a domain I, interacts with DnaA modulators region; sequence MNPSQILENL…VQSGNKAIIN (74 aa). Positions 74–99 are domain II; it reads NIQAQSAKQSNKSTKIDIAHIKAQST. Positions 100–316 are domain III, AAA+ region; it reads ILNPSFTFDS…GIIISLNAYA (217 aa). Residues Gly-146, Gly-148, Lys-149, and Thr-150 each contribute to the ATP site. The segment at 317 to 440 is domain IV, binds dsDNA; the sequence is TILGQEITLE…KNKILVKSQS (124 aa).

It belongs to the DnaA family. As to quaternary structure, oligomerizes as a right-handed, spiral filament on DNA at oriC.

The protein localises to the cytoplasm. Functionally, plays an essential role in the initiation and regulation of chromosomal replication. ATP-DnaA binds to the origin of replication (oriC) to initiate formation of the DNA replication initiation complex once per cell cycle. Binds the DnaA box (a 9 base pair repeat at the origin) and separates the double-stranded (ds)DNA. Forms a right-handed helical filament on oriC DNA; dsDNA binds to the exterior of the filament while single-stranded (ss)DNA is stabiized in the filament's interior. The ATP-DnaA-oriC complex binds and stabilizes one strand of the AT-rich DNA unwinding element (DUE), permitting loading of DNA polymerase. After initiation quickly degrades to an ADP-DnaA complex that is not apt for DNA replication. Binds acidic phospholipids. The polypeptide is Chromosomal replication initiator protein DnaA (Campylobacter jejuni (strain RM1221)).